The primary structure comprises 663 residues: DNA ligase (663 aa).

NAD(+) contacts are provided by residues 31–35 (DFEYD), 80–81 (SL), and glutamate 110. Lysine 112 (N6-AMP-lysine intermediate) is an active-site residue. Positions 133, 168, 284, and 308 each coordinate NAD(+). Zn(2+) contacts are provided by cysteine 402, cysteine 405, cysteine 420, and cysteine 425. The BRCT domain maps to 586–663 (IKDNRFEGKT…DEDKFRKMIE (78 aa)).

This sequence belongs to the NAD-dependent DNA ligase family. LigA subfamily. Requires Mg(2+) as cofactor. It depends on Mn(2+) as a cofactor.

The catalysed reaction is NAD(+) + (deoxyribonucleotide)n-3'-hydroxyl + 5'-phospho-(deoxyribonucleotide)m = (deoxyribonucleotide)n+m + AMP + beta-nicotinamide D-nucleotide.. In terms of biological role, DNA ligase that catalyzes the formation of phosphodiester linkages between 5'-phosphoryl and 3'-hydroxyl groups in double-stranded DNA using NAD as a coenzyme and as the energy source for the reaction. It is essential for DNA replication and repair of damaged DNA. This chain is DNA ligase, found in Acetivibrio thermocellus (strain ATCC 27405 / DSM 1237 / JCM 9322 / NBRC 103400 / NCIMB 10682 / NRRL B-4536 / VPI 7372) (Clostridium thermocellum).